A 1257-amino-acid polypeptide reads, in one-letter code: Pesticidal crystal protein Cry12Aa (1257 aa).

This sequence belongs to the delta endotoxin family.

Its function is as follows. Endotoxin with nematicidal activity. In Bacillus thuringiensis, this protein is Pesticidal crystal protein Cry12Aa (cry12Aa).